A 384-amino-acid chain; its full sequence is V-type proton ATPase subunit C (384 aa).

It belongs to the V-ATPase C subunit family. V-ATPase is a heteromultimeric enzyme made up of two complexes: the ATP-hydrolytic V1 complex and the proton translocation V0 complex. The V1 complex consists of three catalytic AB heterodimers that form a heterohexamer, three peripheral stalks each consisting of EG heterodimers, one central rotor including subunits D and F, and the regulatory subunits C and H. The proton translocation complex V0 consists of the proton transport subunit a, a ring of proteolipid subunits c9c'', rotary subunit d, subunits e and f, and the accessory subunits vah-19/Ac45 and vah-20/PRR. Interacts with V-type proton ATPase subunits a1 unc-32, a2 vha-5 and a3 vha-6. In terms of tissue distribution, expressed ubiquitously; higher levels are found in gastrointestinal and hypodermal cells, as well as H-shaped excretory cell.

The protein resides in the cytoplasm. It localises to the membrane. Its function is as follows. Subunit of the V1 complex of vacuolar(H+)-ATPase (V-ATPase), a multisubunit enzyme composed of a peripheral complex (V1) that hydrolyzes ATP and a membrane integral complex (V0) that translocates protons. V-ATPase is responsible for acidifying and maintaining the pH of intracellular compartments and in some cell types, is targeted to the plasma membrane, where it is responsible for acidifying the extracellular environment. Subunit C is necessary for the assembly of the catalytic sector of the enzyme and is likely to have a specific function in its catalytic activity. Has roles in embryogenesis and ovulation. The sequence is that of V-type proton ATPase subunit C from Caenorhabditis elegans.